Here is a 746-residue protein sequence, read N- to C-terminus: NAD(P)H-quinone oxidoreductase subunit 5, chloroplastic (746 aa).

16 helical membrane-spanning segments follow: residues 9 to 29 (WIIPFIPLPVPILLGIGLLLF), 40 to 60 (WTFLSIFLLSIVMIFSVYLSI), 89 to 109 (IDPLTSIMLILITTVGILVLI), 125 to 145 (FAYLGFFTTSMLGLVTSSNLI), 147 to 167 (VYFFWELVGMCSYLLIGFWFT), 185 to 205 (GDFGLLLGILGLYWITGSFEF), 221 to 241 (VNLLFLTLCAFLLFVGPIAKS), 258 to 278 (TPISALIHAATMVAAGIFLVA), 280 to 300 (LLPLFIVIPSIMYIISLIGII), 327 to 347 (LGYMMLALGMGSYRPALFHLI), 354 to 374 (ALLFLGSGSIIHSMEAIVGYS), 396 to 416 (TAFLIGTLSLCGIPPLAWFWS), 425 to 445 (LLFSPIFAIIACSTAGLTAFY), 547 to 567 (ILFPMLVLLLFTLFVGTIGIP), 608 to 628 (FSVSIALFGIFIAYCLYKPFY), and 722 to 742 (FYLFLYLSYVFIFLMILFFFY).

The protein belongs to the complex I subunit 5 family. NDH is composed of at least 16 different subunits, 5 of which are encoded in the nucleus.

The protein resides in the plastid. Its subcellular location is the chloroplast thylakoid membrane. It carries out the reaction a plastoquinone + NADH + (n+1) H(+)(in) = a plastoquinol + NAD(+) + n H(+)(out). The catalysed reaction is a plastoquinone + NADPH + (n+1) H(+)(in) = a plastoquinol + NADP(+) + n H(+)(out). Functionally, NDH shuttles electrons from NAD(P)H:plastoquinone, via FMN and iron-sulfur (Fe-S) centers, to quinones in the photosynthetic chain and possibly in a chloroplast respiratory chain. The immediate electron acceptor for the enzyme in this species is believed to be plastoquinone. Couples the redox reaction to proton translocation, and thus conserves the redox energy in a proton gradient. The sequence is that of NAD(P)H-quinone oxidoreductase subunit 5, chloroplastic (ndhF) from Draba nemorosa (Woodland whitlowgrass).